Here is a 502-residue protein sequence, read N- to C-terminus: Glutamate--tRNA ligase (502 aa).

Residues Pro-12–Gly-22 carry the 'HIGH' region motif. Residues Lys-259 to Arg-263 carry the 'KMSKS' region motif. Residue Lys-262 coordinates ATP.

Belongs to the class-I aminoacyl-tRNA synthetase family. Glutamate--tRNA ligase type 1 subfamily. Monomer.

The protein resides in the cytoplasm. It catalyses the reaction tRNA(Glu) + L-glutamate + ATP = L-glutamyl-tRNA(Glu) + AMP + diphosphate. Functionally, catalyzes the attachment of glutamate to tRNA(Glu) in a two-step reaction: glutamate is first activated by ATP to form Glu-AMP and then transferred to the acceptor end of tRNA(Glu). The protein is Glutamate--tRNA ligase of Pelodictyon phaeoclathratiforme (strain DSM 5477 / BU-1).